The sequence spans 418 residues: Gamma-glutamyl phosphate reductase (418 aa).

It belongs to the gamma-glutamyl phosphate reductase family.

It is found in the cytoplasm. The catalysed reaction is L-glutamate 5-semialdehyde + phosphate + NADP(+) = L-glutamyl 5-phosphate + NADPH + H(+). Its pathway is amino-acid biosynthesis; L-proline biosynthesis; L-glutamate 5-semialdehyde from L-glutamate: step 2/2. Its function is as follows. Catalyzes the NADPH-dependent reduction of L-glutamate 5-phosphate into L-glutamate 5-semialdehyde and phosphate. The product spontaneously undergoes cyclization to form 1-pyrroline-5-carboxylate. The sequence is that of Gamma-glutamyl phosphate reductase from Geobacter metallireducens (strain ATCC 53774 / DSM 7210 / GS-15).